The following is a 372-amino-acid chain: tRNA-specific 2-thiouridylase MnmA 1 (372 aa).

ATP is bound by residues 26 to 33 (AISGGVDS) and methionine 52. Cysteine 118 (nucleophile) is an active-site residue. Cysteine 118 and cysteine 214 are disulfide-bonded. Position 142 (glycine 142) interacts with ATP. The tract at residues 164-166 (KDQ) is interaction with tRNA. The active-site Cysteine persulfide intermediate is the cysteine 214.

Belongs to the MnmA/TRMU family.

The protein resides in the cytoplasm. It catalyses the reaction S-sulfanyl-L-cysteinyl-[protein] + uridine(34) in tRNA + AH2 + ATP = 2-thiouridine(34) in tRNA + L-cysteinyl-[protein] + A + AMP + diphosphate + H(+). In terms of biological role, catalyzes the 2-thiolation of uridine at the wobble position (U34) of tRNA, leading to the formation of s(2)U34. The sequence is that of tRNA-specific 2-thiouridylase MnmA 1 from Syntrophus aciditrophicus (strain SB).